The chain runs to 474 residues: tRNA-2-methylthio-N(6)-dimethylallyladenosine synthase (474 aa).

The MTTase N-terminal domain maps to 3-120; that stretch reads QKLHIKTWGC…LPEMINQIRG (118 aa). [4Fe-4S] cluster-binding residues include Cys-12, Cys-49, Cys-83, Cys-157, Cys-161, and Cys-164. The region spanning 143–375 is the Radical SAM core domain; sequence RAEGPTAFVS…QQRINNQAAQ (233 aa). Positions 378 to 441 constitute a TRAM domain; that stretch reads RAMLGTEQRV…TNSLRGEVVR (64 aa).

The protein belongs to the methylthiotransferase family. MiaB subfamily. Monomer. [4Fe-4S] cluster is required as a cofactor.

It is found in the cytoplasm. It carries out the reaction N(6)-dimethylallyladenosine(37) in tRNA + (sulfur carrier)-SH + AH2 + 2 S-adenosyl-L-methionine = 2-methylsulfanyl-N(6)-dimethylallyladenosine(37) in tRNA + (sulfur carrier)-H + 5'-deoxyadenosine + L-methionine + A + S-adenosyl-L-homocysteine + 2 H(+). Its function is as follows. Catalyzes the methylthiolation of N6-(dimethylallyl)adenosine (i(6)A), leading to the formation of 2-methylthio-N6-(dimethylallyl)adenosine (ms(2)i(6)A) at position 37 in tRNAs that read codons beginning with uridine. In Histophilus somni (strain 129Pt) (Haemophilus somnus), this protein is tRNA-2-methylthio-N(6)-dimethylallyladenosine synthase.